Consider the following 451-residue polypeptide: Signal recognition particle protein (451 aa).

Residues 107–114 (GLQGSGKT), 190–194 (DTAGR), and 248–251 (TKTD) contribute to the GTP site.

This sequence belongs to the GTP-binding SRP family. SRP54 subfamily. In terms of assembly, part of the signal recognition particle protein translocation system, which is composed of SRP and FtsY. SRP is a ribonucleoprotein composed of Ffh and a 4.5S RNA molecule.

The protein resides in the cytoplasm. It carries out the reaction GTP + H2O = GDP + phosphate + H(+). In terms of biological role, involved in targeting and insertion of nascent membrane proteins into the cytoplasmic membrane. Binds to the hydrophobic signal sequence of the ribosome-nascent chain (RNC) as it emerges from the ribosomes. The SRP-RNC complex is then targeted to the cytoplasmic membrane where it interacts with the SRP receptor FtsY. Interaction with FtsY leads to the transfer of the RNC complex to the Sec translocase for insertion into the membrane, the hydrolysis of GTP by both Ffh and FtsY, and the dissociation of the SRP-FtsY complex into the individual components. This chain is Signal recognition particle protein, found in Buchnera aphidicola subsp. Acyrthosiphon pisum (strain APS) (Acyrthosiphon pisum symbiotic bacterium).